Reading from the N-terminus, the 417-residue chain is Testis-specific Y-encoded-like protein 5 (417 aa).

The segment covering Met-1–Val-25 has biased composition (basic residues). Disordered stretches follow at residues Met-1 to Ala-55, Ala-93 to Leu-112, Gly-127 to Met-202, and Lys-391 to Asn-417. Basic and acidic residues predominate over residues Pro-27–Asp-37. Over residues Ala-93 to Arg-103 the composition is skewed to low complexity. Residues Gly-182–Ala-191 are compositionally biased toward basic and acidic residues. Residues Met-406 to Asn-417 show a composition bias toward polar residues.

This sequence belongs to the nucleosome assembly protein (NAP) family. In terms of assembly, interacts with USP7.

In terms of biological role, involved in modulation of cell growth and cellular response to gamma radiation probably via regulation of the Akt signaling pathway. Involved in regulation of p53/TP53. Suppresses p53/TP53 protein levels and promotes its ubiquitination; the function is dependent on USP7 and independent on MDM2. Proposed to displace p53/TP53 from interaction with USP7. In Homo sapiens (Human), this protein is Testis-specific Y-encoded-like protein 5 (TSPYL5).